Reading from the N-terminus, the 214-residue chain is Histone H1.1 (214 aa).

The interval Met1–Ser43 is disordered. N-acetylserine is present on Ser2. Ser2 and Ser12 each carry phosphoserine. An N6-acetyllysine modification is found at Lys17. Residues Ala20 to Pro37 show a composition bias toward basic residues. Position 36 is an N6-(beta-hydroxybutyryl)lysine (Lys36). Residues Ala38–Lys111 form the H15 domain. At Ser43 the chain carries Phosphoserine. Lys54 bears the N6-(beta-hydroxybutyryl)lysine mark. Residue Arg56 is modified to Citrulline. An N6-(beta-hydroxybutyryl)lysine modification is found at Lys66. At Ser67 the chain carries Phosphoserine. An N6-acetyllysine modification is found at Lys77. Lys87 is subject to N6-(beta-hydroxybutyryl)lysine. An N6-(beta-hydroxybutyryl)lysine; alternate modification is found at Lys92. At Lys92 the chain carries N6-acetyllysine; alternate. The interval Gly93–Lys214 is disordered. Position 106 is a phosphoserine (Ser106). Lys108 carries the N6-(beta-hydroxybutyryl)lysine modification. Positions Lys116–Lys144 are enriched in low complexity. Residue Lys121 is modified to N6-acetyllysine. 2 stretches are compositionally biased toward basic residues: residues Lys145 to Ala179 and Lys186 to Lys214. Residue Thr202 is modified to Phosphothreonine.

This sequence belongs to the histone H1/H5 family. Interacts with DFFB. Post-translationally, H1 histones are progressively phosphorylated during the cell cycle, becoming maximally phosphorylated during late G2 phase and M phase, and being dephosphorylated sharply thereafter. Citrullination at Arg-56 (H1R54ci) by PADI4 takes place within the DNA-binding site of H1 and results in its displacement from chromatin and global chromatin decondensation, thereby promoting pluripotency and stem cell maintenance.

It is found in the nucleus. The protein resides in the chromosome. Its function is as follows. H1 histones bind to linker DNA between nucleosomes forming the macromolecular structure known as the chromatin fiber. H1 histones are necessary for the condensation of nucleosome chains into higher-order structured fibers. Also acts as a regulator of individual gene transcription through chromatin remodeling. In Rattus norvegicus (Rat), this protein is Histone H1.1.